We begin with the raw amino-acid sequence, 201 residues long: Small ribosomal subunit protein uS4c (201 aa).

The tract at residues 17–44 (ALPGLTNKKPRNGSDLRNQSRSGKKSQY) is disordered. In terms of domain architecture, S4 RNA-binding spans 89–149 (MRLDNILFRL…DEQKSRALIQ (61 aa)).

This sequence belongs to the universal ribosomal protein uS4 family. Part of the 30S ribosomal subunit. Contacts protein S5. The interaction surface between S4 and S5 is involved in control of translational fidelity.

It is found in the plastid. It localises to the chloroplast. In terms of biological role, one of the primary rRNA binding proteins, it binds directly to 16S rRNA where it nucleates assembly of the body of the 30S subunit. Its function is as follows. With S5 and S12 plays an important role in translational accuracy. In Nicotiana sylvestris (Wood tobacco), this protein is Small ribosomal subunit protein uS4c (rps4).